We begin with the raw amino-acid sequence, 162 residues long: COP9 signalosome complex subunit 9 (162 aa).

A PCI domain is found at 6–118; it reads ETIKSLEDPY…SVSKSMKFSR (113 aa).

As to quaternary structure, component of a COP9 signalosome-like (CSN) complex, composed of at least RRI1/CSN5, CSN9, RRI2/CSN10, PCI8/CSN11, CSN12 and CSI1. In the complex, it probably interacts directly with CSN12 and CSI1. Also interacts with RPN5.

The protein localises to the cytoplasm. It is found in the nucleus. Functionally, component of the COP9 signalosome (CSN) complex that acts as a regulator of the ubiquitin (Ubl) conjugation pathway by mediating the deneddylation of the cullin subunit of SCF-type E3 ubiquitin-protein ligase complexes. The CSN complex is involved in the regulation of the mating pheromone response. This chain is COP9 signalosome complex subunit 9 (CSN9), found in Saccharomyces cerevisiae (strain ATCC 204508 / S288c) (Baker's yeast).